The primary structure comprises 1318 residues: 1-phosphatidylinositol 4,5-bisphosphate phosphodiesterase classes I and II (1318 aa).

A PI-PLC X-box domain is found at 318–466 (DDMDQPMSHY…LRRKIIIKNK (149 aa)). Active-site residues include His-333 and His-378. 2 residues coordinate substrate: Lys-464 and Lys-466. The segment covering 466 to 481 (KKKHHHHHHHHHHKKP) has biased composition (basic residues). Disordered stretches follow at residues 466–489 (KKKH…TPAA) and 505–594 (QQVG…KETE). Composition is skewed to low complexity over residues 528–543 (ATGT…AGHA) and 554–563 (KDSTGSSDSD). Positions 571–580 (LPNTTPNLPS) are enriched in polar residues. Over residues 585–594 (PPEKAQKETE) the composition is skewed to basic and acidic residues. A PI-PLC Y-box domain is found at 599–715 (ISALVNYVQP…GYLLKPEFMR (117 aa)). Ser-628 and Arg-655 together coordinate substrate. Residues 715 to 843 (RRSDRRLDPF…NLRSEVGQPI (129 aa)) form the C2 domain. Disordered stretches follow at residues 1080–1112 (LDLG…TQES) and 1296–1318 (GSHS…EMKT). A compositionally biased stretch (low complexity) spans 1088–1107 (ESAAADAGEDLAGGSSSLDG).

As to expression, expressed in neuronal cell bodies of the optic lobe, central brain, and thoracic ganglia in adults, and the brain of larvae.

It catalyses the reaction a 1,2-diacyl-sn-glycero-3-phospho-(1D-myo-inositol-4,5-bisphosphate) + H2O = 1D-myo-inositol 1,4,5-trisphosphate + a 1,2-diacyl-sn-glycerol + H(+). The production of the second messenger molecules diacylglycerol (DAG) and inositol 1,4,5-trisphosphate (IP3) is mediated by activated phosphatidylinositol-specific phospholipase C enzymes. In Drosophila melanogaster (Fruit fly), this protein is 1-phosphatidylinositol 4,5-bisphosphate phosphodiesterase classes I and II (Plc21C).